The chain runs to 128 residues: Ribonuclease pancreatic (128 aa).

The segment at 1-23 is disordered; that stretch reads AESSAMKFQRQHVDSEGSSSSNA. 2 residues coordinate substrate: Lys-7 and Arg-10. His-12 acts as the Proton acceptor in catalysis. 4 disulfides stabilise this stretch: Cys-26/Cys-84, Cys-40/Cys-95, Cys-58/Cys-110, and Cys-65/Cys-72. Substrate contacts are provided by residues 41 to 45, Lys-66, and Arg-85; that span reads KPVNT. The active-site Proton donor is the His-119.

This sequence belongs to the pancreatic ribonuclease family. Monomer. Interacts with and forms tight 1:1 complexes with RNH1. Dimerization of two such complexes may occur. Interaction with RNH1 inhibits this protein. As to expression, pancreas.

The protein resides in the secreted. The enzyme catalyses an [RNA] containing cytidine + H2O = an [RNA]-3'-cytidine-3'-phosphate + a 5'-hydroxy-ribonucleotide-3'-[RNA].. The catalysed reaction is an [RNA] containing uridine + H2O = an [RNA]-3'-uridine-3'-phosphate + a 5'-hydroxy-ribonucleotide-3'-[RNA].. In terms of biological role, endonuclease that catalyzes the cleavage of RNA on the 3' side of pyrimidine nucleotides. Acts on single-stranded and double-stranded RNA. This chain is Ribonuclease pancreatic (RNASE1), found in Hydrochoerus hydrochaeris (Capybara).